Consider the following 431-residue polypeptide: Enolase (431 aa).

Q163 contributes to the (2R)-2-phosphoglycerate binding site. E205 serves as the catalytic Proton donor. 3 residues coordinate Mg(2+): D242, E288, and D315. K340, R369, S370, and K391 together coordinate (2R)-2-phosphoglycerate. Catalysis depends on K340, which acts as the Proton acceptor.

This sequence belongs to the enolase family. It depends on Mg(2+) as a cofactor.

The protein localises to the cytoplasm. It is found in the secreted. The protein resides in the cell surface. The catalysed reaction is (2R)-2-phosphoglycerate = phosphoenolpyruvate + H2O. It functions in the pathway carbohydrate degradation; glycolysis; pyruvate from D-glyceraldehyde 3-phosphate: step 4/5. Its function is as follows. Catalyzes the reversible conversion of 2-phosphoglycerate (2-PG) into phosphoenolpyruvate (PEP). It is essential for the degradation of carbohydrates via glycolysis. The sequence is that of Enolase from Bacillus cereus (strain G9842).